A 401-amino-acid chain; its full sequence is O-antigen ligase (401 aa).

Over 1–20 (MFAATRLSRLRHDTSRILSH) the chain is Cytoplasmic. The helical transmembrane segment at 21–37 (WILPLGWLALLTGMFWV) threads the bilayer. Over 38–42 (GDRSD) the chain is Periplasmic. A helical membrane pass occupies residues 43–61 (YHRLFYILLAAPTLLYVIL). The Cytoplasmic portion of the chain corresponds to 62 to 72 (QPRLLRPLTGS). The chain crosses the membrane as a helical span at residues 73–92 (PLFIAFLAFSSYMMLSLSWS). Topologically, residues 93 to 103 (TPENSTGSLLK) are periplasmic. A helical membrane pass occupies residues 104-122 (RPLYIALLFFCAAILALEA). The Cytoplasmic segment spans residues 123 to 129 (PLRLKTA). The helical transmembrane segment at 130 to 150 (TWLAALGAVISAAATLLRYYW) threads the bilayer. The Periplasmic segment spans residues 151–161 (DANPLRLTGYG). A helical membrane pass occupies residues 162–183 (ALYNPLLSAHVYGAFTALWLAY). The Cytoplasmic segment spans residues 184 to 189 (WMQSRP). The chain crosses the membrane as a helical span at residues 190–208 (ILAPLPLISLALLGGLLIA). Over 209–212 (TGSR) the chain is Periplasmic. A helical membrane pass occupies residues 213–229 (TPLVGLTAALMWLVLAG). Residues 230 to 234 (DRKKA) are Cytoplasmic-facing. A helical membrane pass occupies residues 235–252 (LIALALALAGALLGYILY). The Periplasmic portion of the chain corresponds to 253 to 306 (PEVITQRGASFRPEIWADALRQISEHPWLGHGYDHPMRIVLSNGMLLADPHNIE). Residues 258–319 (QRGASFRPEI…LFAGGIIGLL (62 aa)) form a WZY-C region. Residues 307 to 331 (LGVLFAGGIIGLLLWVAIYALAFGF) traverse the membrane as a helical segment. Over 332 to 339 (SWKNRKSP) the chain is Cytoplasmic. The helical transmembrane segment at 340-357 (AVLLASTWLVFGLAAGLT) threads the bilayer. Topologically, residues 358–368 (EGNAFLPRPKE) are periplasmic. A helical transmembrane segment spans residues 369-385 (HWFLIWIPMALLYALWI). Residues 386-401 (QQRFAASRRGEDIAAP) lie on the Cytoplasmic side of the membrane.

This sequence belongs to the O-antigen ligase family. As to quaternary structure, homodimer.

Its subcellular location is the cell inner membrane. The enzyme catalyses a lipid-linked O antigen + a lipid A-core oligosaccharide = a lipopolysaccharide + a polyisoprenyl diphosphate.. It participates in bacterial outer membrane biogenesis; lipopolysaccharide biosynthesis. With respect to regulation, activity does not require ATP and magnesium ions. Its function is as follows. Transferase involved in the biosynthesis of the lipopolysaccharide (LPS). Catalyzes the transfer of a polymerized O-antigen molecule from its polyprenyl diphosphate membrane anchor to a terminal sugar of the lipid A-core oligosaccharide, finalizing the biosynthesis of the lipopolysaccharide. Required for the attachment of both A-band and B-band O-antigens, two forms of O-antigen produced by P.aeruginosa, onto the lipid A-core receptors. Important for cell wall integrity and motility of the bacteria. This chain is O-antigen ligase, found in Pseudomonas aeruginosa (strain ATCC 15692 / DSM 22644 / CIP 104116 / JCM 14847 / LMG 12228 / 1C / PRS 101 / PAO1).